The sequence spans 276 residues: Short-chain dehydrogenase/reductase ATR10 (276 aa).

NADP(+) contacts are provided by isoleucine 29, serine 51, aspartate 78, and asparagine 105. The active-site Proton donor is the serine 161. Positions 185 and 214 each coordinate NADP(+). The active-site Lowers pKa of active site Tyr is the lysine 185.

The protein belongs to the short-chain dehydrogenases/reductases (SDR) family.

Its pathway is mycotoxin biosynthesis. Short-chain dehydrogenase/reductase; part of the core atranone cluster (CAC) which products are predicted to catalyze most or all steps of mycotoxin atranone synthesis, starting from geranylgeranyl pyrophosphate (GGPP). The initial cyclization of GGPP to dolabellane is probably performed by the terpene cyclase ATR13. The Baeyer-Villiger oxidation near the end of the atranone synthesis, which converts atranones D and E to atranones F and G is predicted to be catalyzed by the monooxygenase ATR8. Of the CAC's other predicted gene products, the reducing PKS ATR6 might synthesize a polyketide chain. This polyketide is probably transferred onto the atranone backbone by the polyketide transferase ATR5. Other predicted CAC products include 4 oxygenases (ATR2, ATR3, ATR4, and ATR14), 3 short-chain reductases (ATR7, ATR9, and ATR10), and a methyltransferase (ATR12). These may all be involved in the various steps of atranone biosynthesis, although their specific roles must await experimental determination. The chain is Short-chain dehydrogenase/reductase ATR10 from Stachybotrys chlorohalonatus (strain IBT 40285).